A 349-amino-acid chain; its full sequence is UDP-3-O-acylglucosamine N-acyltransferase (349 aa).

His-243 acts as the Proton acceptor in catalysis.

The protein belongs to the transferase hexapeptide repeat family. LpxD subfamily. As to quaternary structure, homotrimer.

The enzyme catalyses a UDP-3-O-[(3R)-3-hydroxyacyl]-alpha-D-glucosamine + a (3R)-hydroxyacyl-[ACP] = a UDP-2-N,3-O-bis[(3R)-3-hydroxyacyl]-alpha-D-glucosamine + holo-[ACP] + H(+). Its pathway is bacterial outer membrane biogenesis; LPS lipid A biosynthesis. In terms of biological role, catalyzes the N-acylation of UDP-3-O-acylglucosamine using 3-hydroxyacyl-ACP as the acyl donor. Is involved in the biosynthesis of lipid A, a phosphorylated glycolipid that anchors the lipopolysaccharide to the outer membrane of the cell. The chain is UDP-3-O-acylglucosamine N-acyltransferase from Myxococcus xanthus (strain DK1622).